The primary structure comprises 151 residues: Viral interleukin-17 (151 aa).

Positions 1–22 (MTFRKTSLVLLLLLSIDCIVKS) are cleaved as a signal peptide. N-linked (GlcNAc...) asparagine; by host glycans are attached at residues Asn36, Asn53, and Asn64. 2 disulfides stabilise this stretch: Cys90–Cys140 and Cys95–Cys142.

The protein belongs to the IL-17 family.

It is found in the secreted. The chain is Viral interleukin-17 (13) from Saimiri sciureus (Common squirrel monkey).